Consider the following 270-residue polypeptide: Aliphatic sulfonates import ATP-binding protein SsuB 3 (270 aa).

The 222-residue stretch at L17–L238 folds into the ABC transporter domain. ATP is bound at residue G49 to S56.

It belongs to the ABC transporter superfamily. Aliphatic sulfonates importer (TC 3.A.1.17.2) family. In terms of assembly, the complex is composed of two ATP-binding proteins (SsuB), two transmembrane proteins (SsuC) and a solute-binding protein (SsuA).

It localises to the cell inner membrane. The enzyme catalyses ATP + H2O + aliphatic sulfonate-[sulfonate-binding protein]Side 1 = ADP + phosphate + aliphatic sulfonateSide 2 + [sulfonate-binding protein]Side 1.. Its function is as follows. Part of the ABC transporter complex SsuABC involved in aliphatic sulfonates import. Responsible for energy coupling to the transport system. The chain is Aliphatic sulfonates import ATP-binding protein SsuB 3 from Pseudomonas savastanoi pv. phaseolicola (strain 1448A / Race 6) (Pseudomonas syringae pv. phaseolicola (strain 1448A / Race 6)).